The sequence spans 553 residues: Cytokine-like nuclear factor N-PAC (553 aa).

The region spanning 8 to 66 (LGDLVWGKLGRYPPWPGKIVNPPKDLKKPRGKKCFFVKFFGTEDHAWIKVEQLKPYHLH) is the PWWP domain. Composition is skewed to basic and acidic residues over residues 92–145 (KTKG…EGKK) and 162–182 (RAQD…KDLT). The tract at residues 92 to 188 (KTKGKDQASS…KDLTIPESST (97 aa)) is disordered. The segment at residues 168 to 180 (PRKRGRPPKDEKD) is a DNA-binding region (a.T hook). Residues 214–217 (DPHF) form an interaction with histone H3 region. A dehydrogenase domain region spans residues 261–553 (GSITPTDKKI…MSAVYRAYIH (293 aa)). Residues 271-285 (GFLG…IVSN), Thr-362, and Lys-505 contribute to the NAD(+) site.

It belongs to the HIBADH-related family. NP60 subfamily. Homotetramere. Binds to mononucleosomes.

The protein resides in the nucleus. It localises to the chromosome. Cytokine-like nuclear factor with chromatin gene reader activity involved in chromatin modification and regulation of gene expression. Acts as a nucleosome-destabilizing factor that is recruited to genes during transcriptional activation. Recognizes and binds histone H3 without a preference for specific epigenetic markers and also binds DNA. Interacts with KDM1B and promotes its histone demethylase activity by facilitating the capture of H3 tails, they form a multifunctional enzyme complex that modifies transcribed chromatin and facilitates Pol II transcription through nucleosomes. The sequence is that of Cytokine-like nuclear factor N-PAC (GLYR1) from Gallus gallus (Chicken).